We begin with the raw amino-acid sequence, 296 residues long: AUGMIN subunit 2 (296 aa).

2 coiled-coil regions span residues 56 to 83 (DDLI…QGRK) and 253 to 285 (AVHK…NRRL). The segment at 218-296 (AVSLPTTPGG…WPPSVKKSSV (79 aa)) is disordered. Residues 264-277 (QNEEEEEEEEEEDG) show a composition bias toward acidic residues.

Belongs to the HAUS2 family. In terms of assembly, part of the augmin complex composed of 8 subunits. The complex acts on microtubules and interacts with gamma-tubulin in spindles and the phragmoplast.

In terms of biological role, contributes to the assembly of the acentrosomal spindle and phragmoplast microtubule arrays as part of the augmin complex. The protein is AUGMIN subunit 2 of Arabidopsis thaliana (Mouse-ear cress).